Reading from the N-terminus, the 274-residue chain is Shikimate dehydrogenase (NADP(+)) (274 aa).

Residues 14 to 16 (SQS) and Thr-61 each bind shikimate. The active-site Proton acceptor is Lys-65. Shikimate is bound by residues Asn-86 and Asp-102. NADP(+) contacts are provided by residues 128-132 (GAGGA), 151-156 (NRTVEK), and Leu-215. Residue Tyr-217 coordinates shikimate. Gly-239 is an NADP(+) binding site.

Belongs to the shikimate dehydrogenase family. In terms of assembly, homodimer.

It catalyses the reaction shikimate + NADP(+) = 3-dehydroshikimate + NADPH + H(+). It functions in the pathway metabolic intermediate biosynthesis; chorismate biosynthesis; chorismate from D-erythrose 4-phosphate and phosphoenolpyruvate: step 4/7. In terms of biological role, involved in the biosynthesis of the chorismate, which leads to the biosynthesis of aromatic amino acids. Catalyzes the reversible NADPH linked reduction of 3-dehydroshikimate (DHSA) to yield shikimate (SA). The protein is Shikimate dehydrogenase (NADP(+)) of Proteus mirabilis (strain HI4320).